A 288-amino-acid polypeptide reads, in one-letter code: Alpha/beta hydrolase domain-containing protein 17B (288 aa).

Residues Ser-170, Asp-235, and His-264 each act as charge relay system in the active site. The residue at position 282 (Ser-282) is a Phosphoserine.

This sequence belongs to the AB hydrolase superfamily. ABHD17 family. Palmitoylated on cysteine residues located in a cysteine cluster at the N-terminus which promotes membrane localization. Palmitoylation is required for post-synaptic localization and for depalmitoylating activity towards DLG4/PSD95.

It is found in the cell membrane. The protein resides in the recycling endosome membrane. The protein localises to the cell projection. It localises to the dendritic spine. Its subcellular location is the postsynaptic density membrane. It carries out the reaction S-hexadecanoyl-L-cysteinyl-[protein] + H2O = L-cysteinyl-[protein] + hexadecanoate + H(+). With respect to regulation, inhibited by palmostatin-B. Hydrolyzes fatty acids from S-acylated cysteine residues in proteins. Has depalmitoylating activity towards DLG4/PSD95. Has depalmitoylating activity towards GAP43. Has depalmitoylating activity towards MAP6. Has depalmitoylating activity towards NRAS. The protein is Alpha/beta hydrolase domain-containing protein 17B of Homo sapiens (Human).